Consider the following 183-residue polypeptide: Intraflagellar transport protein 27 homolog (183 aa).

GTP is bound by residues 12 to 19, 63 to 67, and 120 to 123; these read GAPTVGKT, DVSGQ, and NKSD.

This sequence belongs to the small GTPase superfamily. Rab family. Component of the IFT complex B.

Its subcellular location is the cell projection. It localises to the cilium. The protein localises to the flagellum. Its function is as follows. Small GTPase-like component of the intraflagellar transport (IFT) complex B required for both anterograde and retrograde intraflagellar transport. May be involved in cargo loading of the retrograde transport. This chain is Intraflagellar transport protein 27 homolog, found in Trypanosoma brucei brucei (strain 927/4 GUTat10.1).